Reading from the N-terminus, the 303-residue chain is MSGGQDLQLPPGFRFHPTDEELVMHYLCRRCAGLPIAVPIIAEIDLYKFDPWQLPRMALYGEKEWYFFSPRDRKYPNGSRPNRAAGSGYWKATGADKPVGSPKPVAIKKALVFYAGKAPKGEKTNWIMHEYRLADVDRSARKKNSLRLDDWVLCRIYNKKGGLEKPPAAAVAAAGMVSSGGGVQRKPMVGVNAAVSSPPEQKPVVAGPAFPDLAAYYDRPSDSMPRLHADSSCSEQVLSPEFACEVQSQPKISEWERTFATVGPINPAASILDPAGSGGLGGLGGGGSDPLLQDILMYWGKPF.

Residues 9–159 (LPPGFRFHPT…DWVLCRIYNK (151 aa)) form the NAC domain.

Interacts with NAC071. In terms of tissue distribution, widely expressed.

It is found in the nucleus. Functionally, transcription activator that binds to the promoter of the stress response gene LEA19. Involved in tolerance to abiotic stresses. Transcription activator involved in response to abiotic and biotic stresses. Involved in drought and salt stress responses, and defense response to the rice blast fungus. Transcription activator involved tolerance to cold and salt stresses. Transcription activator involved in tolerance to drought stress. Targets directly and activates genes involved in membrane modification, nicotianamine (NA) biosynthesis, glutathione relocation, accumulation of phosphoadenosine phosphosulfate and glycosylation in roots. Controls root growth at early vegetative stage through chromatin modification and histone lysine deacytaltion by HDAC1. The sequence is that of NAC domain-containing protein 48 from Oryza sativa subsp. japonica (Rice).